A 766-amino-acid polypeptide reads, in one-letter code: Slit homolog 2 protein (766 aa).

An N-terminal signal peptide occupies residues 1-30; it reads MSGIGWQTLSLSLALVLSILNKVAPHACPA. Positions 31–55 constitute an LRRNT domain; it reads QCSCSGSTVDCHGLALRIVPRNIPR. 6 LRR repeats span residues 56-77, 80-101, 104-125, 128-149, 152-173, and 176-197; these read NTERLDLNGNNITRITKTDFAG, HLRILQLMENKISTIERGAFHD, ELERLRLNRNNLQLFPELLFLG, KLYRLDLSENQIQAIPRKAFRG, DIKNLQLDYNQISCIEDGAFRA, and DLEVLTLNNNNITRLSVASFNH. Asparagine 66 is a glycosylation site (N-linked (GlcNAc...) asparagine). An N-linked (GlcNAc...) asparagine glycan is attached at asparagine 186. An LRRCT 1 domain is found at 209–259; sequence NNLYCDCHLAWLSDWLRQRPRVGLYTQCMGPSHLRGHNVAEVQKREFVCSD. One can recognise an LRRNT 2 domain in the interval 268–304; the sequence is MAPSCSVLHCPIACTCSNNIVDCRGKGLTEIPTNLPE. An intrachain disulfide couples cysteine 281 to cysteine 290. LRR repeat units follow at residues 305 to 326, 329 to 350, 353 to 374, 377 to 398, and 401 to 422; these read TITEIRLEQNSIRVIPPGAFSP, KLRRLDLSNNQISELAPDAFQG, SLNSLVLYGNKITELPKSLFEG, SLQLLLLNANKINCLRVDAFQD, and NLNLLSLYDNKLQTVAKGTFSA. One can recognise an LRRCT 2 domain in the interval 434-484; sequence NPFICDCHLKWLADYLHTNPIETSGARCTSPRRLANKRIGQIKSKKFRCSG. 4 disulfides stabilise this stretch: cysteine 438–cysteine 461, cysteine 440–cysteine 482, cysteine 502–cysteine 508, and cysteine 506–cysteine 515. Positions 493–529 constitute an LRRNT 3 domain; that stretch reads SGDCFADLACPEKCRCEGTTVDCSNQKLNKIPDHIPQ. LRR repeat units follow at residues 530–551, 555–576, 579–600, 603–624, and 627–648; these read YTAELRLNNNEFTVLEATGIFK, QLRKINLSNNKITDIEEGAFEG, GVNEILLTSNRLENVQHKMFKG, SLKTLMLRSNRISCVGNDSFTG, and SVRLLSLYDNQITTVAPGAFGT. Asparagine 560 carries N-linked (GlcNAc...) asparagine glycosylation. A glycan (N-linked (GlcNAc...) asparagine) is linked at asparagine 619. The LRRCT 3 domain occupies 660-710; the sequence is NPFNCNCHLAWLGEWLRRKRIVTGNPRCQKPYFLKEIPIQDVAIQDFTCDD. Intrachain disulfides connect cysteine 664–cysteine 687, cysteine 666–cysteine 708, cysteine 723–cysteine 729, and cysteine 727–cysteine 736. Residues 714–750 form the LRRNT 4 domain; the sequence is DNSCSPLSRCPSECTCLDTVVRCSNKGLKVLPKGIPR.

As to quaternary structure, homodimer. Binds ROBO1 and ROBO2 with high affinity. Interacts with GREM1.

The protein resides in the secreted. In terms of biological role, thought to act as molecular guidance cue in cellular migration, and function appears to be mediated by interaction with roundabout homolog receptors. During neural development involved in axonal navigation at the ventral midline of the neural tube and projection of axons to different regions. SLIT1 and SLIT2 seem to be essential for midline guidance in the forebrain by acting as repulsive signal preventing inappropriate midline crossing by axons projecting from the olfactory bulb. In spinal cord development may play a role in guiding commissural axons once they reached the floor plate by modulating the response to netrin. In vitro, silences the attractive effect of NTN1 but not its growth-stimulatory effect and silencing requires the formation of a ROBO1-DCC complex. May be implicated in spinal cord midline post-crossing axon repulsion. In vitro, only commissural axons that crossed the midline responded to SLIT2. In the developing visual system appears to function as repellent for retinal ganglion axons by providing a repulsion that directs these axons along their appropriate paths prior to, and after passage through, the optic chiasm. In vitro, collapses and repels retinal ganglion cell growth cones. Seems to play a role in branching and arborization of CNS sensory axons, and in neuronal cell migration. Seems to be involved in regulating leukocyte migration. The protein is Slit homolog 2 protein (Slit2) of Rattus norvegicus (Rat).